A 372-amino-acid chain; its full sequence is MRQCGLVRAAQLLRTCGLAEWHTPYRALSSLPDEKKELIKNGPDLQDFLSGELVDKSSWAAYKGDLKRQKGERLRLPPWVKTEIPMGKNYNKLKNTLRNLNLHTVCEEARCPNIGECWGGGEYGTATATIMLMGDTCTRGCRFCSVKTARNPPPLDPDEPYNTSKAIAEWGLDYVVLTSVDRDDISDGGAEHIAQTVSMLKERNKTILIECLTPDFRGNMKAVETVAKSGLDVYAHNVETVPALQRHVRDPRANFDQSLNVLKHAKNVRPDLVSKTSIMLGLGETDEQIYSTMKALREAGVDCLTLGQYMQPTKRHLKVEEYITPEKFKYWEKAGNELGFLYTASGPLVRSSYKAGEFFLKNLIEKRKTKAI.

7 residues coordinate [4Fe-4S] cluster: C106, C111, C117, C137, C141, C144, and S352. Residues 122–341 (EYGTATATIM…EKAGNELGFL (220 aa)) enclose the Radical SAM core domain.

This sequence belongs to the radical SAM superfamily. Lipoyl synthase family. [4Fe-4S] cluster is required as a cofactor.

The protein localises to the mitochondrion. It carries out the reaction [[Fe-S] cluster scaffold protein carrying a second [4Fe-4S](2+) cluster] + N(6)-octanoyl-L-lysyl-[protein] + 2 oxidized [2Fe-2S]-[ferredoxin] + 2 S-adenosyl-L-methionine + 4 H(+) = [[Fe-S] cluster scaffold protein] + N(6)-[(R)-dihydrolipoyl]-L-lysyl-[protein] + 4 Fe(3+) + 2 hydrogen sulfide + 2 5'-deoxyadenosine + 2 L-methionine + 2 reduced [2Fe-2S]-[ferredoxin]. The protein operates within protein modification; protein lipoylation via endogenous pathway; protein N(6)-(lipoyl)lysine from octanoyl-[acyl-carrier-protein]: step 2/2. Its function is as follows. Catalyzes the radical-mediated insertion of two sulfur atoms into the C-6 and C-8 positions of the octanoyl moiety bound to the lipoyl domains of lipoate-dependent enzymes, thereby converting the octanoylated domains into lipoylated derivatives. The sequence is that of Lipoyl synthase, mitochondrial (lias) from Xenopus laevis (African clawed frog).